We begin with the raw amino-acid sequence, 644 residues long: Magnetosome protein MamZ (644 aa).

The segment at 1-427 (MPRNAEAPAK…YAAWLLANGI (427 aa)) is major facilitator domain. 18 helical membrane-spanning segments follow: residues 22 to 42 (WNIIYLLMTVGALMAALSISI), 63 to 83 (ADIQVVAEIVSIVCVGWFGLL), 92 to 112 (IIALGFLIAVVGAAVSLLSLQ), 113 to 133 (VGLAFGAAGLVLFYLTRVLLT), 159 to 179 (LMGNLVFMMVFGGTMLAAIVM), 185 to 205 (PGGVFLIMCLPLLAGIAGFQL), 254 to 274 (VIILSLFFSLWCISVSDLVGV), 281 to 301 (AHAAVMIGLLGLAVLAAVPLW), 311 to 331 (ISAIGASLSLAALGYIWLGMF), 337 to 357 (WLVALPLLMVGIGHAGCFVTL), 369 to 389 (ILGAMVGAGYLVGGLGTVMLV), 403 to 423 (APFILMGTGKMLVTLYAAWLL), 440 to 460 (TVDWKPLVFLTAALPFVWLVG), 478 to 498 (VGFVNRYLGDWAFTFLIISLA), 518 to 538 (IGLFAFFYAVMHVLAYVALEW), 553 to 573 (PFILLGLVAFALLIPLAFTSA), 588 to 608 (LHSATYVINALVALHFILAAN), and 612 to 629 (GEPYVYAAAVIVLLWYRF). The interval 488 to 599 (WAFTFLIISL…SATYVINALV (112 aa)) is ferric reductase-like domain.

This sequence in the N-terminal section; belongs to the major facilitator superfamily.

Its subcellular location is the magnetosome membrane. Its function is as follows. Required for correct biomineralization of the magnetosome; probably converts and then transports some form of iron. It is partially functionally redundant with MamH. May function with MamX, MamY amd Mms6. The sequence is that of Magnetosome protein MamZ from Paramagnetospirillum magneticum (strain ATCC 700264 / AMB-1) (Magnetospirillum magneticum).